The primary structure comprises 65 residues: DNA-directed RNA polymerase subunit Rpo10 (65 aa).

Residues Cys-7, Cys-10, Cys-44, and Cys-45 each coordinate Zn(2+).

It belongs to the archaeal Rpo10/eukaryotic RPB10 RNA polymerase subunit family. As to quaternary structure, part of the RNA polymerase complex. Zn(2+) serves as cofactor.

It is found in the cytoplasm. It catalyses the reaction RNA(n) + a ribonucleoside 5'-triphosphate = RNA(n+1) + diphosphate. Its function is as follows. DNA-dependent RNA polymerase (RNAP) catalyzes the transcription of DNA into RNA using the four ribonucleoside triphosphates as substrates. The sequence is that of DNA-directed RNA polymerase subunit Rpo10 from Thermococcus onnurineus (strain NA1).